Reading from the N-terminus, the 163-residue chain is Periplasmic nitrate reductase, electron transfer subunit (163 aa).

An N-terminal signal peptide occupies residues 1–32 (MRSQDPSRRLSRRLWTLFALALCLVTGTVALA). Positions 76, 90, 93, 94, 111, 130, 133, and 134 each coordinate heme c.

Belongs to the NapB family. In terms of assembly, component of the periplasmic nitrate reductase NapAB complex composed of NapA and NapB. In terms of processing, binds 2 heme C groups per subunit.

It localises to the periplasm. Functionally, electron transfer subunit of the periplasmic nitrate reductase complex NapAB. Receives electrons from the membrane-anchored tetraheme c-type NapC protein and transfers these to NapA subunit, thus allowing electron flow between membrane and periplasm. Essential for periplasmic nitrate reduction with nitrate as the terminal electron acceptor. This chain is Periplasmic nitrate reductase, electron transfer subunit, found in Neorhizobium galegae (Rhizobium galegae).